The primary structure comprises 684 residues: Histone-lysine N-methyltransferase SETMAR (684 aa).

The interval Met-1–Met-345 is histone-lysine N-methyltransferase. A Pre-SET domain is found at Pro-73–Gly-136. Zn(2+) is bound by residues Cys-75, Cys-77, Cys-82, Cys-87, Cys-89, Cys-118, Cys-122, Cys-124, and Cys-128. Positions Phe-139–Ser-263 constitute an SET domain. Residues Lys-149–Trp-151, Tyr-192, Arg-220, and Asn-223–His-224 each bind S-adenosyl-L-methionine. Zn(2+)-binding residues include Cys-226, Cys-287, Cys-289, and Cys-294. The 17-residue stretch at Leu-283–Pro-299 folds into the Post-SET domain. The interval Leu-346–Asp-684 is mariner transposase Hsmar1. 2 consecutive DNA-binding regions (H-T-H motif) follow at residues Lys-364–Lys-395 and Thr-428–Lys-448. Asp-496 lines the Mg(2+) pocket. Lys-498 carries the N6-methyllysine modification. Ser-508 bears the Phosphoserine; by CHEK1 mark. Asp-588 contributes to the Mg(2+) binding site.

This sequence in the N-terminal section; belongs to the class V-like SAM-binding methyltransferase superfamily. In the C-terminal section; belongs to the mariner transposase family. As to quaternary structure, homodimer. Interacts with PRPF19; required for SETMAR recruitment to damaged DNA sites. Interacts with PCNA. Interacts with TOP2A; stimulates TOP2A topoisomerase activity. May interact with RAD9A and/or RAD9B. The cofactor is Mg(2+). In terms of processing, methylated. Methylation regulates activity in DNA decatenation. Phosphorylated at Ser-508 by CHEK1 and dephosphorylated by protein phosphatase 2A/PP2A. Phosphorylation at Ser-508 is enhanced by DNA damage and promotes recruitment to damaged DNA. It stimulates DNA repair and impairs replication fork restart. In terms of tissue distribution, widely expressed, with highest expression in placenta and ovary and lowest expression in skeletal muscle.

It localises to the nucleus. It is found in the chromosome. It carries out the reaction L-lysyl(36)-[histone H3] + 2 S-adenosyl-L-methionine = N(6),N(6)-dimethyl-L-lysyl(36)-[histone H3] + 2 S-adenosyl-L-homocysteine + 2 H(+). Its function is as follows. Protein derived from the fusion of a methylase with the transposase of an Hsmar1 transposon that plays a role in DNA double-strand break repair, stalled replication fork restart and DNA integration. DNA-binding protein, it is indirectly recruited to sites of DNA damage through protein-protein interactions. Also has kept a sequence-specific DNA-binding activity recognizing the 19-mer core of the 5'-terminal inverted repeats (TIRs) of the Hsmar1 element and displays a DNA nicking and end joining activity. In parallel, has a histone methyltransferase activity and methylates 'Lys-4' and 'Lys-36' of histone H3. Specifically mediates dimethylation of H3 'Lys-36' at sites of DNA double-strand break and may recruit proteins required for efficient DSB repair through non-homologous end-joining. Also regulates replication fork processing, promoting replication fork restart and regulating DNA decatenation through stimulation of the topoisomerase activity of TOP2A. The chain is Histone-lysine N-methyltransferase SETMAR from Homo sapiens (Human).